The following is a 143-amino-acid chain: ATP synthase subunit 9, mitochondrial (143 aa).

The N-terminal 62 residues, 1-62 (MAASRVFAQR…ARQAFAARRQ (62 aa)), are a transit peptide targeting the mitochondrion. 2 helical membrane passes run 85 to 105 (IGLG…LLAV) and 119 to 139 (AILG…VAMM).

This sequence belongs to the ATPase C chain family. F-type ATPases have 2 components, CF(1) - the catalytic core - and CF(0) - the membrane proton channel. CF(1) has five subunits: alpha(3), beta(3), gamma(1), delta(1), epsilon(1). CF(0) has three main subunits: a, b and c.

The protein localises to the mitochondrion membrane. In terms of biological role, mitochondrial membrane ATP synthase (F(1)F(0) ATP synthase or Complex V) produces ATP from ADP in the presence of a proton gradient across the membrane which is generated by electron transport complexes of the respiratory chain. F-type ATPases consist of two structural domains, F(1) - containing the extramembraneous catalytic core and F(0) - containing the membrane proton channel, linked together by a central stalk and a peripheral stalk. During catalysis, ATP synthesis in the catalytic domain of F(1) is coupled via a rotary mechanism of the central stalk subunits to proton translocation. Part of the complex F(0) domain. A homomeric c-ring of probably 10 subunits is part of the complex rotary element. This is ATP synthase subunit 9, mitochondrial (atp9) from Emericella nidulans (strain FGSC A4 / ATCC 38163 / CBS 112.46 / NRRL 194 / M139) (Aspergillus nidulans).